A 293-amino-acid polypeptide reads, in one-letter code: Pyridoxal 5'-phosphate synthase subunit PdxS (293 aa).

Asp-23 provides a ligand contact to D-ribose 5-phosphate. The active-site Schiff-base intermediate with D-ribose 5-phosphate is the Lys-80. A D-ribose 5-phosphate-binding site is contributed by Gly-152. Residue Arg-164 coordinates D-glyceraldehyde 3-phosphate. D-ribose 5-phosphate is bound by residues Gly-213 and 234–235 (GS).

It belongs to the PdxS/SNZ family. As to quaternary structure, in the presence of PdxT, forms a dodecamer of heterodimers.

The catalysed reaction is aldehydo-D-ribose 5-phosphate + D-glyceraldehyde 3-phosphate + L-glutamine = pyridoxal 5'-phosphate + L-glutamate + phosphate + 3 H2O + H(+). The protein operates within cofactor biosynthesis; pyridoxal 5'-phosphate biosynthesis. In terms of biological role, catalyzes the formation of pyridoxal 5'-phosphate from ribose 5-phosphate (RBP), glyceraldehyde 3-phosphate (G3P) and ammonia. The ammonia is provided by the PdxT subunit. Can also use ribulose 5-phosphate and dihydroxyacetone phosphate as substrates, resulting from enzyme-catalyzed isomerization of RBP and G3P, respectively. This Chloroflexus aggregans (strain MD-66 / DSM 9485) protein is Pyridoxal 5'-phosphate synthase subunit PdxS.